The chain runs to 236 residues: RNA-binding protein 24 (236 aa).

The region spanning 11–88 (TKIFVGGLPY…RKANVNLAYL (78 aa)) is the RRM domain. Positions 175-199 (QYPYAASPAAAGYVTTGGYSYAVQQ) are necessary for interaction with EIF4E.

As to quaternary structure, interacts with EIF4E; this interaction prevents EIF4E from binding to p53/TP53 mRNA and inhibits the assembly of translation initiation complex. Expressed strongly in heart and skeletal muscles. Weakly expressed in intestine, aorta, liver, lung, kidney, uterus and bladder.

It is found in the nucleus. Its subcellular location is the cytoplasm. Functionally, multifunctional RNA-binding protein involved in the regulation of pre-mRNA splicing, mRNA stability and mRNA translation important for cell fate decision and differentiation. Plays a major role in pre-mRNA alternative splicing regulation. Mediates preferentially muscle-specific exon inclusion in numerous mRNAs important for striated cardiac and skeletal muscle cell differentiation. Binds to intronic splicing enhancer (ISE) composed of stretches of GU-rich motifs localized in flanking intron of exon that will be included by alternative splicing. Involved in embryonic stem cell (ESC) transition to cardiac cell differentiation by promoting pre-mRNA alternative splicing events of several pluripotency and/or differentiation genes. Plays a role in the regulation of mRNA stability. Binds to 3'-untranslated region (UTR) AU-rich elements in target transcripts, such as CDKN1A and MYOG, leading to maintain their stabilities. Involved in myogenic differentiation by regulating MYOG levels. Binds to multiple regions in the mRNA 3'-UTR of TP63, hence inducing its destabilization. Also promotes the destabilization of the CHRM2 mRNA via its binding to a region in the coding sequence. Plays a role in the regulation of mRNA translation. Mediates repression of p53/TP53 mRNA translation through its binding to U-rich element in the 3'-UTR, hence preventing EIF4E from binding to p53/TP53 mRNA and translation initiation. Binds to a huge amount of mRNAs. Required for embryonic heart development, sarcomer and M-band formation in striated muscles. Together with RBM20, promotes the expression of short isoforms of PDLIM5/ENH in cardiomyocytes. The polypeptide is RNA-binding protein 24 (Mus musculus (Mouse)).